Reading from the N-terminus, the 409-residue chain is LL-diaminopimelate aminotransferase (409 aa).

Residues tyrosine 15 and glycine 42 each coordinate substrate. Pyridoxal 5'-phosphate-binding positions include tyrosine 72, 108–109 (AK), tyrosine 132, asparagine 186, tyrosine 217, and 245–247 (SFS). 3 residues coordinate substrate: lysine 109, tyrosine 132, and asparagine 186. At lysine 248 the chain carries N6-(pyridoxal phosphate)lysine. Pyridoxal 5'-phosphate contacts are provided by arginine 256 and asparagine 291. Residues asparagine 291 and arginine 387 each contribute to the substrate site.

It belongs to the class-I pyridoxal-phosphate-dependent aminotransferase family. LL-diaminopimelate aminotransferase subfamily. In terms of assembly, homodimer. Pyridoxal 5'-phosphate is required as a cofactor.

The catalysed reaction is (2S,6S)-2,6-diaminopimelate + 2-oxoglutarate = (S)-2,3,4,5-tetrahydrodipicolinate + L-glutamate + H2O + H(+). It functions in the pathway amino-acid biosynthesis; L-lysine biosynthesis via DAP pathway; LL-2,6-diaminopimelate from (S)-tetrahydrodipicolinate (aminotransferase route): step 1/1. In terms of biological role, involved in the synthesis of meso-diaminopimelate (m-DAP or DL-DAP), required for both lysine and peptidoglycan biosynthesis. Catalyzes the direct conversion of tetrahydrodipicolinate to LL-diaminopimelate. This chain is LL-diaminopimelate aminotransferase, found in Phocaeicola vulgatus (strain ATCC 8482 / DSM 1447 / JCM 5826 / CCUG 4940 / NBRC 14291 / NCTC 11154) (Bacteroides vulgatus).